Reading from the N-terminus, the 240-residue chain is Purine nucleoside phosphorylase RC0672 (240 aa).

Residues H60, C96, and H113 each coordinate Zn(2+).

The protein belongs to the purine nucleoside phosphorylase YfiH/LACC1 family. In terms of assembly, homodimer. Cu(2+) is required as a cofactor. Zn(2+) serves as cofactor.

The catalysed reaction is adenosine + phosphate = alpha-D-ribose 1-phosphate + adenine. The enzyme catalyses S-methyl-5'-thioadenosine + phosphate = 5-(methylsulfanyl)-alpha-D-ribose 1-phosphate + adenine. It carries out the reaction inosine + phosphate = alpha-D-ribose 1-phosphate + hypoxanthine. It catalyses the reaction adenosine + H2O + H(+) = inosine + NH4(+). Its function is as follows. Purine nucleoside enzyme that catalyzes the phosphorolysis of adenosine and inosine nucleosides, yielding D-ribose 1-phosphate and the respective free bases, adenine and hypoxanthine. Also catalyzes the phosphorolysis of S-methyl-5'-thioadenosine into adenine and S-methyl-5-thio-alpha-D-ribose 1-phosphate. Also has adenosine deaminase activity. This Rickettsia conorii (strain ATCC VR-613 / Malish 7) protein is Purine nucleoside phosphorylase RC0672.